The sequence spans 119 residues: Large ribosomal subunit protein bL20 (119 aa).

The protein belongs to the bacterial ribosomal protein bL20 family.

Binds directly to 23S ribosomal RNA and is necessary for the in vitro assembly process of the 50S ribosomal subunit. It is not involved in the protein synthesizing functions of that subunit. This Heliobacterium modesticaldum (strain ATCC 51547 / Ice1) protein is Large ribosomal subunit protein bL20.